The chain runs to 143 residues: Hemoglobin anodic subunit alpha (143 aa).

An N-acetylserine modification is found at Ser2. The 142-residue stretch at 2-143 (SLSAKDMAVV…FTLALSERYR (142 aa)) folds into the Globin domain. His60 contacts O2. Residue His89 coordinates heme b.

The protein belongs to the globin family. As to quaternary structure, heterotetramer of two alpha chains and two beta chains. As to expression, red blood cells.

Functionally, involved in oxygen transport from gills to the various peripheral tissues. This is Hemoglobin anodic subunit alpha (hba) from Anguilla anguilla (European freshwater eel).